The sequence spans 304 residues: tRNA pseudouridine synthase B (304 aa).

Catalysis depends on D48, which acts as the Nucleophile.

Belongs to the pseudouridine synthase TruB family. Type 1 subfamily.

It carries out the reaction uridine(55) in tRNA = pseudouridine(55) in tRNA. In terms of biological role, responsible for synthesis of pseudouridine from uracil-55 in the psi GC loop of transfer RNAs. The sequence is that of tRNA pseudouridine synthase B from Pseudomonas paraeruginosa (strain DSM 24068 / PA7) (Pseudomonas aeruginosa (strain PA7)).